Reading from the N-terminus, the 162-residue chain is Succinate dehydrogenase assembly factor 2-A, mitochondrial (162 aa).

The protein belongs to the SDHAF2 family. As to quaternary structure, interacts with the flavoprotein subunit within the SDH catalytic dimer.

Its subcellular location is the mitochondrion matrix. Its function is as follows. Plays an essential role in the assembly of succinate dehydrogenase (SDH), an enzyme complex (also referred to as respiratory complex II) that is a component of both the tricarboxylic acid (TCA) cycle and the mitochondrial electron transport chain, and which couples the oxidation of succinate to fumarate with the reduction of ubiquinone (coenzyme Q) to ubiquinol. Required for flavinylation (covalent attachment of FAD) of the flavoprotein subunit of the SDH catalytic dimer. This Drosophila yakuba (Fruit fly) protein is Succinate dehydrogenase assembly factor 2-A, mitochondrial.